We begin with the raw amino-acid sequence, 698 residues long: FHF complex subunit HOOK-interacting protein 2B (698 aa).

The protein belongs to the FHIP family.

The chain is FHF complex subunit HOOK-interacting protein 2B (fhip2b) from Xenopus tropicalis (Western clawed frog).